Consider the following 244-residue polypeptide: Carbonyl reductase [NADPH] 2 (244 aa).

Position 11–39 (11–39 (LVTGAGKGIGRDTVKALHASGAKVVAVTR)) interacts with NADP(+). A Phosphoserine modification is found at S42. S136 contributes to the substrate binding site. Y149 functions as the Proton acceptor in the catalytic mechanism. S176 bears the Phosphoserine mark.

The protein belongs to the short-chain dehydrogenases/reductases (SDR) family. In terms of assembly, homotetramer. Predominantly expressed in lung, in ciliated cells, non-ciliated bronchiolar cells and type-II alveolar pneumocytes. Also detected in adipose tissue (at protein level). Low expression in testis, heart, kidney, spleen, brain and liver.

The protein localises to the mitochondrion matrix. The catalysed reaction is a secondary alcohol + NADP(+) = a ketone + NADPH + H(+). In terms of biological role, may function in the pulmonary metabolism of endogenous carbonyl compounds, such as aliphatic aldehydes and ketones derived from lipid peroxidation, 3-ketosteroids and fatty aldehydes, as well as in xenobiotic metabolism. This is Carbonyl reductase [NADPH] 2 (Cbr2) from Mus musculus (Mouse).